Reading from the N-terminus, the 150-residue chain is Transcription antitermination protein NusB (150 aa).

Belongs to the NusB family.

Its function is as follows. Involved in transcription antitermination. Required for transcription of ribosomal RNA (rRNA) genes. Binds specifically to the boxA antiterminator sequence of the ribosomal RNA (rrn) operons. The polypeptide is Transcription antitermination protein NusB (Alcanivorax borkumensis (strain ATCC 700651 / DSM 11573 / NCIMB 13689 / SK2)).